Reading from the N-terminus, the 175-residue chain is RNA pyrophosphohydrolase (175 aa).

A Nudix hydrolase domain is found at 6–149 (GYRPNVGIVI…KRDVYRRVMK (144 aa)). Residues 38–59 (GGINPGETPEQAMYRELFEEVG) carry the Nudix box motif.

Belongs to the Nudix hydrolase family. RppH subfamily. Requires a divalent metal cation as cofactor.

Functionally, accelerates the degradation of transcripts by removing pyrophosphate from the 5'-end of triphosphorylated RNA, leading to a more labile monophosphorylated state that can stimulate subsequent ribonuclease cleavage. The polypeptide is RNA pyrophosphohydrolase (Yersinia enterocolitica serotype O:8 / biotype 1B (strain NCTC 13174 / 8081)).